Consider the following 212-residue polypeptide: Cytochrome c biogenesis ATP-binding export protein CcmA (212 aa).

In terms of domain architecture, ABC transporter spans 7 to 209; that stretch reads LSLQNLSCQR…HLQKLNLAAY (203 aa). Residue 39–46 participates in ATP binding; that stretch reads GHNGIGKT.

Belongs to the ABC transporter superfamily. CcmA exporter (TC 3.A.1.107) family. In terms of assembly, the complex is composed of two ATP-binding proteins (CcmA) and two transmembrane proteins (CcmB).

Its subcellular location is the cell inner membrane. The enzyme catalyses heme b(in) + ATP + H2O = heme b(out) + ADP + phosphate + H(+). Its function is as follows. Part of the ABC transporter complex CcmAB involved in the biogenesis of c-type cytochromes; once thought to export heme, this seems not to be the case, but its exact role is uncertain. Responsible for energy coupling to the transport system. The sequence is that of Cytochrome c biogenesis ATP-binding export protein CcmA from Haemophilus influenzae (strain ATCC 51907 / DSM 11121 / KW20 / Rd).